Consider the following 333-residue polypeptide: MVNQHTAHQLPFASQPPLASAQLAPTLISLDDWALATMVGPDTVKYLQGQVTADVSALADDRHILCAHCDAKGKMWSNLRLFHHGEGFAFIERRNLRDAQLSELKKYAVFSKTTIAPDDNAVLLGAAGAGIRELLASAFSQLPDADHPVVQHEGATLLHFAHPAERFLLVLSPEQSASLLEQLGDKVSLNDSRQWLTLDIEAGQPIIDSANSAQFIPQATNLQALNGISFSKGCYTGQEMVARAKYRGANKRALYWLAGKANQVPQAGDDLELQLGENWRRTGTVLAASQLQNGEVWVQAVLNNDLTAENVLRVREDADSQITVQPLPYEITD.

Folate-binding residues include Trp33 and Trp195.

Belongs to the tRNA-modifying YgfZ family.

It localises to the cytoplasm. Functionally, folate-binding protein involved in regulating the level of ATP-DnaA and in the modification of some tRNAs. It is probably a key factor in regulatory networks that act via tRNA modification, such as initiation of chromosomal replication. The chain is tRNA-modifying protein YgfZ from Pectobacterium carotovorum subsp. carotovorum (strain PC1).